The primary structure comprises 401 residues: cAMP-dependent protein kinase type II-alpha regulatory subunit (401 aa).

The residue at position 2 (Ser2) is an N-acetylserine. Residues 2-135 (SHIQIPPGLT…RLQEACKDIL (134 aa)) are dimerization and phosphorylation. Ser47, Ser74, Ser76, and Ser96 each carry phosphoserine. A disordered region spans residues 61–83 (ESSAVPVIEEDGESDSDSEDADL). A compositionally biased stretch (acidic residues) spans 68-83 (IEEDGESDSDSEDADL). 3',5'-cyclic AMP-binding positions include 136-257 (LFKN…ESVP), Glu205, Arg214, 258-401 (LFKS…DPGQ), Glu335, and Arg344. The residue at position 212 (Thr212) is a Phosphothreonine; by PDPK1. Phosphoserine is present on residues Ser347 and Ser392.

This sequence belongs to the cAMP-dependent kinase regulatory chain family. In terms of assembly, the inactive form of the enzyme is composed of two regulatory chains and two catalytic chains. Activation by cAMP produces two active catalytic monomers and a regulatory dimer that binds four cAMP molecules. Interacts with AKAP4. Interacts with CBFA2T3. Interacts with the phosphorylated form of PJA2. Interacts with MYRIP. This interaction may link PKA to components of the exocytosis machinery, thus facilitating exocytosis, including insulin release. Forms a complex composed of PRKAR2A, GSK3B and GSKIP through GSKIP interaction; facilitates PKA-induced phosphorylation and regulates GSK3B activity. Interacts with ADCY8; inhibits adenylate cyclase activity through PKA phosphorylation. Phosphorylated by the activated catalytic chain. In terms of tissue distribution, four types of regulatory chains are found: I-alpha, I-beta, II-alpha, and II-beta. Their expression varies among tissues and is in some cases constitutive and in others inducible.

It is found in the cytoplasm. Its subcellular location is the cell membrane. Regulatory subunit of the cAMP-dependent protein kinases involved in cAMP signaling in cells. Type II regulatory chains mediate membrane association by binding to anchoring proteins, including the MAP2 kinase. The chain is cAMP-dependent protein kinase type II-alpha regulatory subunit (Prkar2a) from Mus musculus (Mouse).